The primary structure comprises 475 residues: Protein transport protein Sec61 subunit alpha (475 aa).

Over 1 to 32 (MGFRFLDIVKPFTSLVPEVGQPDRKIPFREKV) the chain is Cytoplasmic. Residues 33 to 53 (LWTAICLFIFLVCSQIPLYGI) form a helical membrane-spanning segment. Residues 54 to 75 (RSTDSSDPFYWAKVIMASNRGT) are Lumenal-facing. Residues 76–96 (LMELGISPIVTSGMVMQLLAG) traverse the membrane as a helical segment. The Cytoplasmic segment spans residues 97 to 118 (AKLIEIDQSVKADRDLFSAAQK). Residues 119–139 (LFGMLICVGQGVAYIWSGSYG) form a helical membrane-spanning segment. Over 140 to 145 (DPAVLG) the chain is Lumenal. Residues 146–166 (FGNCFLIVLQLFFAGIIVMLL) traverse the membrane as a helical segment. At 167–173 (DELLQKG) the chain is on the cytoplasmic side. A helical membrane pass occupies residues 174–194 (YGIGSGISLFIATNICETIVW). At 195-241 (KTFSPTTVSVGKGTEFEGAVIALFHLLLTRNDKVRALKEAFYRQNLP) the chain is on the lumenal side. A helical transmembrane segment spans residues 242–262 (NITNLLATVLIFMVVIYFQGF). At 263-289 (RVDLPVKSTRVSGQQGTYPIKLFYTSN) the chain is on the cytoplasmic side. A helical membrane pass occupies residues 290–310 (IPIILQSALVSNLYFISQLLY). Topologically, residues 311–353 (RRFPDNILVNLFGAWRTSEYSQQMIPVSGLTYYISSPNNMSAV) are lumenal. A helical membrane pass occupies residues 354 to 374 (LADPFHALFYITFMLTSCALF). Residues 375 to 411 (SKVWIEVSGSSARDVAKQLKDQQMTMKGHRDTSVIKE) are Cytoplasmic-facing. A helical membrane pass occupies residues 412–434 (LNRYIPTAAAFGGLCIGALTVVA). The Lumenal portion of the chain corresponds to 435 to 440 (DFMGAI). A helical transmembrane segment spans residues 441-461 (GSGTGILLAVTIIYQYFETFV). Over 462–475 (KEQQELSGGIGGLF) the chain is Cytoplasmic.

The protein belongs to the SecY/SEC61-alpha family. In terms of assembly, heterotrimeric complex composed of SEC61-alpha, SEC61-beta and SEC61-gamma.

It is found in the endoplasmic reticulum membrane. Its function is as follows. Appears to play a crucial role in the insertion of secretory and membrane polypeptides into the ER. It is required for assembly of membrane and secretory proteins. Found to be tightly associated with membrane-bound ribosomes, either directly or through adaptor proteins. The polypeptide is Protein transport protein Sec61 subunit alpha (sec61a) (Dictyostelium discoideum (Social amoeba)).